Consider the following 510-residue polypeptide: Bifunctional pantoate ligase/cytidylate kinase (510 aa).

The interval 1–276 (MKKVIIRKTE…CGETRLIDHV (276 aa)) is pantoate--beta-alanine ligase. 29 to 36 (MGNLHNGH) lines the ATP pocket. The Proton donor role is filled by His36. Gln61 lines the (R)-pantoate pocket. Residue Gln61 coordinates beta-alanine. 150-153 (GEKD) is a binding site for ATP. Residue Gln156 participates in (R)-pantoate binding. An ATP-binding site is contributed by 187 to 190 (LSSR). Residues 277 to 510 (FLMKRSPIIA…DKIPKETQIR (234 aa)) are cytidylate kinase.

It in the N-terminal section; belongs to the pantothenate synthetase family. In the C-terminal section; belongs to the cytidylate kinase family. Type 1 subfamily.

The protein resides in the cytoplasm. The enzyme catalyses (R)-pantoate + beta-alanine + ATP = (R)-pantothenate + AMP + diphosphate + H(+). The catalysed reaction is CMP + ATP = CDP + ADP. It catalyses the reaction dCMP + ATP = dCDP + ADP. It participates in cofactor biosynthesis; (R)-pantothenate biosynthesis; (R)-pantothenate from (R)-pantoate and beta-alanine: step 1/1. Catalyzes the condensation of pantoate with beta-alanine in an ATP-dependent reaction via a pantoyl-adenylate intermediate. In terms of biological role, catalyzes the transfer of a phosphate group from ATP to either CMP or dCMP to form CDP or dCDP and ADP, respectively. The chain is Bifunctional pantoate ligase/cytidylate kinase from Prochlorococcus marinus (strain MIT 9312).